Reading from the N-terminus, the 286-residue chain is Beta-lactamase SHV-2 (286 aa).

A signal peptide spans 1-21 (MRYIRLCIISLLATLPLAVHA). Ser66 acts as the Acyl-ester intermediate in catalysis. A disulfide bridge links Cys73 with Cys119. The active-site Proton acceptor is the Glu164. 230 to 232 (KTG) is a binding site for substrate.

The protein belongs to the class-A beta-lactamase family.

It carries out the reaction a beta-lactam + H2O = a substituted beta-amino acid. This enzyme hydrolyzes cefotaxime, ceftazidime and other broad spectrum cephalosporins. The chain is Beta-lactamase SHV-2 (bla) from Klebsiella pneumoniae.